The sequence spans 273 residues: uncharacterized protein (273 aa).

The signal sequence occupies residues 1 to 21 (MKILRWLFALVMLIATTEAMA).

To S.typhimurium YadU.

Part of the yfcOPQRSUV fimbrial operon. Could contribute to adhesion to various surfaces in specific environmental niches. Increases adhesion to eukaryotic T24 bladder epithelial cells in the absence of fim genes. This is an uncharacterized protein from Escherichia coli (strain K12).